A 388-amino-acid polypeptide reads, in one-letter code: Putative C-&gt;U-editing enzyme APOBEC-4 (388 aa).

Positions 60–176 (PQTKHLTFYE…AWNREALRGL (117 aa)) constitute a CMP/dCMP-type deaminase domain. Histidine 92 is a binding site for Zn(2+). The active-site Proton donor is glutamate 94. Zn(2+)-binding residues include cysteine 126 and cysteine 133. Positions 322 to 356 (KVKALRKSPSGRPVKKEEARKGSTRSQEANETNKS) are disordered.

It belongs to the cytidine and deoxycytidylate deaminase family. Zn(2+) serves as cofactor.

Putative C to U editing enzyme whose physiological substrate is not yet known. The sequence is that of Putative C-&gt;U-editing enzyme APOBEC-4 (Apobec4) from Rattus norvegicus (Rat).